The primary structure comprises 63 residues: Non-structural protein 3b (63 aa).

The protein is Non-structural protein 3b of Avian infectious bronchitis virus (strain UK/183/66) (IBV).